The chain runs to 465 residues: Argininosuccinate lyase (465 aa).

Belongs to the lyase 1 family. Argininosuccinate lyase subfamily.

Its subcellular location is the cytoplasm. The enzyme catalyses 2-(N(omega)-L-arginino)succinate = fumarate + L-arginine. The protein operates within amino-acid biosynthesis; L-arginine biosynthesis; L-arginine from L-ornithine and carbamoyl phosphate: step 3/3. The chain is Argininosuccinate lyase from Variovorax paradoxus (strain S110).